Consider the following 156-residue polypeptide: MPRKGHIAKRDVLPDPVYNSKVVTKLINNVMEDGKKGVAQKICYDAFQIINEKTGRDAMEVFEEAMNNIMPLLEVKARRIGGANYQVPIEVRPERRQTLGLRWLLAASRKRGEKYMRERLAGELMDAANNTGAAVKKREDTHKMAEANKAFAHYRY.

This sequence belongs to the universal ribosomal protein uS7 family. Part of the 30S ribosomal subunit. Contacts proteins S9 and S11.

Functionally, one of the primary rRNA binding proteins, it binds directly to 16S rRNA where it nucleates assembly of the head domain of the 30S subunit. Is located at the subunit interface close to the decoding center, probably blocks exit of the E-site tRNA. This Clostridium perfringens (strain ATCC 13124 / DSM 756 / JCM 1290 / NCIMB 6125 / NCTC 8237 / Type A) protein is Small ribosomal subunit protein uS7.